The following is a 257-amino-acid chain: K88 minor fimbrial subunit FaeJ (257 aa).

The signal sequence occupies residues 1–26 (MLNIIHRLKSGMFPALFFLTSASVLA).

The protein resides in the fimbrium. Functionally, K88 minor fimbrial subunit, plays an essential role in the biogenesis of the K88 fimbriae. Fimbriae (also called pili), are polar filaments radiating from the surface of the bacterium to a length of 0.5-1.5 micrometers and numbering 100-300 per cell. They enable bacteria to colonize the epithelium of specific host organs. This Escherichia coli protein is K88 minor fimbrial subunit FaeJ (faeJ).